Reading from the N-terminus, the 129-residue chain is Large ribosomal subunit protein bL19 (129 aa).

Belongs to the bacterial ribosomal protein bL19 family.

In terms of biological role, this protein is located at the 30S-50S ribosomal subunit interface and may play a role in the structure and function of the aminoacyl-tRNA binding site. This chain is Large ribosomal subunit protein bL19, found in Methylobacillus flagellatus (strain ATCC 51484 / DSM 6875 / VKM B-1610 / KT).